The sequence spans 100 residues: Urease subunit gamma (100 aa).

Belongs to the urease gamma subunit family. As to quaternary structure, heterotrimer of UreA (gamma), UreB (beta) and UreC (alpha) subunits. Three heterotrimers associate to form the active enzyme.

It localises to the cytoplasm. The catalysed reaction is urea + 2 H2O + H(+) = hydrogencarbonate + 2 NH4(+). It functions in the pathway nitrogen metabolism; urea degradation; CO(2) and NH(3) from urea (urease route): step 1/1. This chain is Urease subunit gamma, found in Methylobacillus flagellatus (strain ATCC 51484 / DSM 6875 / VKM B-1610 / KT).